Reading from the N-terminus, the 562-residue chain is Glutamate--tRNA ligase (562 aa).

Positions 90 to 100 (PNPSGLLHIGH) match the 'HIGH' region motif.

The protein belongs to the class-I aminoacyl-tRNA synthetase family. Glutamate--tRNA ligase type 2 subfamily.

The protein resides in the cytoplasm. The enzyme catalyses tRNA(Glu) + L-glutamate + ATP = L-glutamyl-tRNA(Glu) + AMP + diphosphate. In terms of biological role, catalyzes the attachment of glutamate to tRNA(Glu) in a two-step reaction: glutamate is first activated by ATP to form Glu-AMP and then transferred to the acceptor end of tRNA(Glu). The polypeptide is Glutamate--tRNA ligase (Nanoarchaeum equitans (strain Kin4-M)).